We begin with the raw amino-acid sequence, 375 residues long: MQCALYDAGRCRSCQWITQPIPEQLSAKTADLKNLLADFPVEEWCAPVSGPEQGFRNKAKMVVSGSVEKPLLGMLHRDGTPEDLCDCPLYPASFAPVFAALKPFIARAGLTPYNVARKRGELKYILLTESQSDGGMMLRFVLRSDTKLAQLRKALPWLHEQLPQLKVITVNIQPVHMAIMEGETEIYLTEHQALAERFNDVPLWIRPQSFFQTNPAVASQLYATARDWVRQLPVTHMWDLFCGVGGFGLHCATPDMQLTGIEIAPEAIACAKQSAAELGLTCLQFQALDSTQFATAQGEVPELVLVNPPRRGIGKPLCDYLSTMAPCFIIYSSCNAQTMAKDIRELPGYRIERVQLFDMFPHTAHYEVLTLQVKI.

[4Fe-4S] cluster contacts are provided by cysteine 3, cysteine 11, cysteine 14, and cysteine 87. 4 residues coordinate S-adenosyl-L-methionine: glutamine 212, phenylalanine 241, glutamate 262, and asparagine 307. Cysteine 334 (nucleophile) is an active-site residue.

This sequence belongs to the class I-like SAM-binding methyltransferase superfamily. RNA M5U methyltransferase family. RlmC subfamily.

It carries out the reaction uridine(747) in 23S rRNA + S-adenosyl-L-methionine = 5-methyluridine(747) in 23S rRNA + S-adenosyl-L-homocysteine + H(+). Catalyzes the formation of 5-methyl-uridine at position 747 (m5U747) in 23S rRNA. The polypeptide is 23S rRNA (uracil(747)-C(5))-methyltransferase RlmC (Shigella dysenteriae serotype 1 (strain Sd197)).